A 250-amino-acid polypeptide reads, in one-letter code: Triosephosphate isomerase (250 aa).

9-11 (NWK) lines the substrate pocket. His94 functions as the Electrophile in the catalytic mechanism. Glu166 serves as the catalytic Proton acceptor. Residues Gly172, Ser212, and 233 to 234 (GG) contribute to the substrate site.

Belongs to the triosephosphate isomerase family. In terms of assembly, homodimer.

The protein resides in the cytoplasm. It catalyses the reaction D-glyceraldehyde 3-phosphate = dihydroxyacetone phosphate. Its pathway is carbohydrate biosynthesis; gluconeogenesis. It functions in the pathway carbohydrate degradation; glycolysis; D-glyceraldehyde 3-phosphate from glycerone phosphate: step 1/1. Its function is as follows. Involved in the gluconeogenesis. Catalyzes stereospecifically the conversion of dihydroxyacetone phosphate (DHAP) to D-glyceraldehyde-3-phosphate (G3P). The protein is Triosephosphate isomerase of Treponema denticola (strain ATCC 35405 / DSM 14222 / CIP 103919 / JCM 8153 / KCTC 15104).